Consider the following 129-residue polypeptide: MILGLGMDVVEVARIERILAGPPARVDRFLERCFTARERAYCDAARDRATRYAARFAAKEAASKALGAPAGIRFTDVEVVRGAGAPVLELAGVAATAAARLGVRRVLVTLTHDGGVAAATVVLDGEEAR.

Residues aspartate 8 and glutamate 60 each contribute to the Mg(2+) site.

This sequence belongs to the P-Pant transferase superfamily. AcpS family. Requires Mg(2+) as cofactor.

It localises to the cytoplasm. It carries out the reaction apo-[ACP] + CoA = holo-[ACP] + adenosine 3',5'-bisphosphate + H(+). In terms of biological role, transfers the 4'-phosphopantetheine moiety from coenzyme A to a Ser of acyl-carrier-protein. The sequence is that of Holo-[acyl-carrier-protein] synthase from Anaeromyxobacter sp. (strain Fw109-5).